Reading from the N-terminus, the 379-residue chain is Chaperone protein DnaJ (379 aa).

One can recognise a J domain in the interval 5–70; sequence DYYEILEVSR…EKRAAYDRYG (66 aa). The segment at 135–213 adopts a CR-type zinc-finger fold; that stretch reads GIKVPISYVT…CGGSGRVRNE (79 aa). Zn(2+) contacts are provided by Cys-148, Cys-151, Cys-165, Cys-168, Cys-187, Cys-190, Cys-201, and Cys-204. CXXCXGXG motif repeat units lie at residues 148–155, 165–172, 187–194, and 201–208; these read CSSCSGIG, CGNCNGAG, CNVCNGEG, and CRRCGGSG.

It belongs to the DnaJ family. Homodimer. It depends on Zn(2+) as a cofactor.

It localises to the cytoplasm. Its function is as follows. Participates actively in the response to hyperosmotic and heat shock by preventing the aggregation of stress-denatured proteins and by disaggregating proteins, also in an autonomous, DnaK-independent fashion. Unfolded proteins bind initially to DnaJ; upon interaction with the DnaJ-bound protein, DnaK hydrolyzes its bound ATP, resulting in the formation of a stable complex. GrpE releases ADP from DnaK; ATP binding to DnaK triggers the release of the substrate protein, thus completing the reaction cycle. Several rounds of ATP-dependent interactions between DnaJ, DnaK and GrpE are required for fully efficient folding. Also involved, together with DnaK and GrpE, in the DNA replication of plasmids through activation of initiation proteins. The sequence is that of Chaperone protein DnaJ from Anaplasma marginale (strain Florida).